The chain runs to 489 residues: Bypass of stop codon protein 5 (489 aa).

A disordered region spans residues 1–42; the sequence is MQESKEPQNKFEGCQRISSSSSTLFGGTSFEEPRCGTSQGKE. The span at 18–30 shows a compositional bias: low complexity; sequence SSSSSTLFGGTSF. Phosphoserine occurs at positions 111 and 350.

The protein belongs to the BUL1 family.

Functionally, appears to play a role in translation fidelity, and may act when translation is compromised. May be a component of the ubiquitination pathway. The sequence is that of Bypass of stop codon protein 5 (BSC5) from Saccharomyces cerevisiae (strain ATCC 204508 / S288c) (Baker's yeast).